A 225-amino-acid polypeptide reads, in one-letter code: 7-cyano-7-deazaguanine synthase (225 aa).

9–19 (YSGGLDSTTCL) lines the ATP pocket. Zn(2+) contacts are provided by Cys188, Cys198, Cys201, and Cys204.

The protein belongs to the QueC family. Zn(2+) serves as cofactor.

The catalysed reaction is 7-carboxy-7-deazaguanine + NH4(+) + ATP = 7-cyano-7-deazaguanine + ADP + phosphate + H2O + H(+). It functions in the pathway purine metabolism; 7-cyano-7-deazaguanine biosynthesis. Its function is as follows. Catalyzes the ATP-dependent conversion of 7-carboxy-7-deazaguanine (CDG) to 7-cyano-7-deazaguanine (preQ(0)). This chain is 7-cyano-7-deazaguanine synthase, found in Citrifermentans bemidjiense (strain ATCC BAA-1014 / DSM 16622 / JCM 12645 / Bem) (Geobacter bemidjiensis).